The following is a 531-amino-acid chain: Tyrosine 2,3-aminomutase (531 aa).

The active-site Proton donor/acceptor is the Tyr-51. Residue His-81 participates in substrate binding. Positions 140-142 (ASG) form a cross-link, 5-imidazolinone (Ala-Gly). At Ser-141 the chain carries 2,3-didehydroalanine (Ser). Substrate-binding residues include Asn-193 and Arg-298.

The protein belongs to the TAL/TAM family. As to quaternary structure, homotetramer; dimer of dimers. Contains an active site 4-methylidene-imidazol-5-one (MIO), which is formed autocatalytically by cyclization and dehydration of residues Ala-Ser-Gly.

It catalyses the reaction L-tyrosine = 3-amino-3-(4-hydroxyphenyl)propanoate. The enzyme catalyses L-tyrosine = (E)-4-coumarate + NH4(+). Functionally, has aminomutase and, to a lesser extent, ammonia-lyase activity. Primarily, catalyzes the rearrangement of L-tyrosine to R-beta-tyrosine, which is incorporated into secondary metabolites called chondramides. The aminomutase activity mainly produces R-beta-tyrosine but also S-beta tyrosine in smaller amounts. Does not accept D-tyrosine, L-histidine or L-phenylalanine as substrates. The protein is Tyrosine 2,3-aminomutase of Chondromyces crocatus.